The sequence spans 433 residues: Enolase (433 aa).

Gln164 serves as a coordination point for (2R)-2-phosphoglycerate. The Proton donor role is filled by Glu206. Residues Asp243, Glu289, and Asp316 each contribute to the Mg(2+) site. Residues Lys341, Arg370, Ser371, and Lys392 each contribute to the (2R)-2-phosphoglycerate site. Lys341 functions as the Proton acceptor in the catalytic mechanism.

The protein belongs to the enolase family. Mg(2+) serves as cofactor.

The protein resides in the cytoplasm. It localises to the secreted. It is found in the cell surface. It catalyses the reaction (2R)-2-phosphoglycerate = phosphoenolpyruvate + H2O. It functions in the pathway carbohydrate degradation; glycolysis; pyruvate from D-glyceraldehyde 3-phosphate: step 4/5. In terms of biological role, catalyzes the reversible conversion of 2-phosphoglycerate (2-PG) into phosphoenolpyruvate (PEP). It is essential for the degradation of carbohydrates via glycolysis. This is Enolase from Borreliella afzelii (strain PKo) (Borrelia afzelii).